The sequence spans 534 residues: Bifunctional pantoate ligase/cytidylate kinase (534 aa).

The segment at 1–302 (MRLLTTVAAL…LGSTRLIDNT (302 aa)) is pantoate--beta-alanine ligase. ATP is bound at residue 48-55 (MGSLHQGH). His55 serves as the catalytic Proton donor. A (R)-pantoate-binding site is contributed by Gln79. Position 79 (Gln79) interacts with beta-alanine. 172–175 (GQKD) contributes to the ATP binding site. Position 178 (Gln178) interacts with (R)-pantoate. Residues Val201 and 209-212 (CSSR) contribute to the ATP site. Residues 303–534 (ILRDRQPIIA…DYYQQRLSQW (232 aa)) form a cytidylate kinase region.

The protein in the N-terminal section; belongs to the pantothenate synthetase family. It in the C-terminal section; belongs to the cytidylate kinase family. Type 1 subfamily.

It localises to the cytoplasm. It carries out the reaction (R)-pantoate + beta-alanine + ATP = (R)-pantothenate + AMP + diphosphate + H(+). It catalyses the reaction CMP + ATP = CDP + ADP. The catalysed reaction is dCMP + ATP = dCDP + ADP. Its pathway is cofactor biosynthesis; (R)-pantothenate biosynthesis; (R)-pantothenate from (R)-pantoate and beta-alanine: step 1/1. Its function is as follows. Catalyzes the condensation of pantoate with beta-alanine in an ATP-dependent reaction via a pantoyl-adenylate intermediate. Catalyzes the transfer of a phosphate group from ATP to either CMP or dCMP to form CDP or dCDP and ADP, respectively. The sequence is that of Bifunctional pantoate ligase/cytidylate kinase from Trichormus variabilis (strain ATCC 29413 / PCC 7937) (Anabaena variabilis).